A 505-amino-acid polypeptide reads, in one-letter code: Flagellin (505 aa).

It belongs to the bacterial flagellin family.

Its subcellular location is the secreted. It localises to the bacterial flagellum. Its function is as follows. Flagellin is the subunit protein which polymerizes to form the filaments of bacterial flagella. The polypeptide is Flagellin (fliC) (Salmonella derby).